The sequence spans 363 residues: UV excision repair protein RAD23 homolog A (363 aa).

In terms of domain architecture, Ubiquitin-like spans 1–81 (MAVTITLKTL…VVVMVTKTKA (81 aa)). The tract at residues 81–160 (AGQGTSAPPE…EDAASTLVTG (80 aa)) is disordered. The span at 85–103 (TSAPPEASPTAAPESSTSF) shows a compositional bias: low complexity. Lysine 122 is covalently cross-linked (Glycyl lysine isopeptide (Lys-Gly) (interchain with G-Cter in ubiquitin)). Phosphoserine is present on residues serine 123, serine 128, serine 133, serine 136, and serine 138. Positions 126–147 (EESAPTTSPESVSGSVPSSGSS) are enriched in low complexity. Residues 161-201 (SEYETMLTEIMSMGYERERVVAALRASYNNPHRAVEYLLTG) enclose the UBA 1 domain. The disordered stretch occupies residues 203–227 (PGSPEPEHGSVQESQVSEQPATEAA). Serine 205 is subject to Phosphoserine. Over residues 213-222 (VQESQVSEQP) the composition is skewed to polar residues. A phosphoserine mark is found at serine 295 and serine 357. Positions 318–358 (PQEKEAIERLKALGFPESLVIQAYFACEKNENLAANFLLSQ) constitute a UBA 2 domain. The tract at residues 319–363 (QEKEAIERLKALGFPESLVIQAYFACEKNENLAANFLLSQNFDDE) is HIV-1 vpr binding.

It belongs to the RAD23 family. As to quaternary structure, interacts with XPC; the interaction is suggesting the existence of a functional equivalent variant XPC complex. Interacts with PSMD4 and PSMC5. Interacts with ATXN3. Interacts with UBQLN2. In terms of assembly, (Microbial infection) Interacts with HIV-1 Vpr.

The protein localises to the nucleus. Multiubiquitin chain receptor involved in modulation of proteasomal degradation. Binds to 'Lys-48'-linked polyubiquitin chains in a length-dependent manner and with a lower affinity to 'Lys-63'-linked polyubiquitin chains. Proposed to be capable to bind simultaneously to the 26S proteasome and to polyubiquitinated substrates and to deliver ubiquitinated proteins to the proteasome. Functionally, involved in nucleotide excision repair and is thought to be functional equivalent for RAD23B in global genome nucleotide excision repair (GG-NER) by association with XPC. In vitro, the XPC:RAD23A dimer has NER activity. Can stabilize XPC. Its function is as follows. (Microbial infection) Involved in Vpr-dependent replication of HIV-1 in non-proliferating cells and primary macrophages. Required for the association of HIV-1 Vpr with the host proteasome. This chain is UV excision repair protein RAD23 homolog A (RAD23A), found in Homo sapiens (Human).